A 185-amino-acid chain; its full sequence is Peptidoglycan-recognition protein SC1a/b (185 aa).

Residues 1 to 21 (MVSKVALLLAVLVCSQYMAQG) form the signal peptide. Positions 46–170 (SYAIIHHTAG…RQVSATECPG (125 aa)) constitute an N-acetylmuramoyl-L-alanine amidase domain. His51 provides a ligand contact to Zn(2+). A disulfide bridge connects residues Cys58 and Cys64. Zn(2+)-binding residues include His160 and Cys168.

It belongs to the N-acetylmuramoyl-L-alanine amidase 2 family. Zn(2+) is required as a cofactor.

Its subcellular location is the secreted. The enzyme catalyses Hydrolyzes the link between N-acetylmuramoyl residues and L-amino acid residues in certain cell-wall glycopeptides.. Its function is as follows. N-acetylmuramyl-L-alanine amidase involved in innate immunity by degrading bacterial peptidoglycans (PGN). Plays a scavenger role by digesting biologically active PGN into biologically inactive fragments. Has no direct bacteriolytic activity. In Drosophila simulans (Fruit fly), this protein is Peptidoglycan-recognition protein SC1a/b (PGRP-SC1a).